The following is a 108-amino-acid chain: uncharacterized protein (108 aa).

3 consecutive transmembrane segments (helical) span residues 4-24 (IIFL…FFSM), 46-66 (GMMV…IFIG), and 81-101 (IMAI…WFVL).

Its subcellular location is the cell membrane. This is an uncharacterized protein from Escherichia coli O157:H7.